The chain runs to 433 residues: UDP-N-acetylmuramoylalanine--D-glutamate ligase (433 aa).

125-131 (GTSGKTT) lines the ATP pocket.

Belongs to the MurCDEF family.

It localises to the cytoplasm. The catalysed reaction is UDP-N-acetyl-alpha-D-muramoyl-L-alanine + D-glutamate + ATP = UDP-N-acetyl-alpha-D-muramoyl-L-alanyl-D-glutamate + ADP + phosphate + H(+). The protein operates within cell wall biogenesis; peptidoglycan biosynthesis. Functionally, cell wall formation. Catalyzes the addition of glutamate to the nucleotide precursor UDP-N-acetylmuramoyl-L-alanine (UMA). This chain is UDP-N-acetylmuramoylalanine--D-glutamate ligase, found in Nitratidesulfovibrio vulgaris (strain ATCC 29579 / DSM 644 / CCUG 34227 / NCIMB 8303 / VKM B-1760 / Hildenborough) (Desulfovibrio vulgaris).